We begin with the raw amino-acid sequence, 162 residues long: Caveolin-2 (162 aa).

Residues 1-86 (MGLETEKADV…FEISKYVIYK (86 aa)) are Cytoplasmic-facing. Tyr19 carries the post-translational modification Phosphotyrosine; by SRC. A phosphoserine mark is found at Ser20 and Ser23. Position 27 is a phosphotyrosine; by SRC (Tyr27). Phosphoserine is present on Ser36. The helical intramembrane region spans 87–107 (FLTLFLAIPLAFAAGILFATL). Topologically, residues 108–162 (SCLHIWIIMPFVKTCLMVLPSVQTIWKSITDVVIAPLCTSVGRSFSSVSLQLSHD) are cytoplasmic.

The protein belongs to the caveolin family. As to quaternary structure, monomer or homodimer. Interacts with CAV1; the interaction forms a stable heterooligomeric complex that is required for targeting to lipid rafts and for caveolae formation. Tyrosine phosphorylated forms do not form heterooligomers with the Tyr-19-phosphorylated form existing as a monomer or dimer, and the Tyr-27-form as a monomer only. Interacts (tyrosine phosphorylated form) with the SH2 domain-containing proteins, RASA1, NCK1 and SRC. Interacts (tyrosine phosphorylated form) with INSR, the interaction (Tyr-27-phosphorylated form) is increased on insulin stimulation. Interacts (Tyr-19 phosphorylated form) with MAPK1 (phosphorylated form); the interaction, promoted by insulin, leads to nuclear location and MAPK1 activation. Interacts with STAT3; the interaction is increased on insulin-induced tyrosine phosphorylation leading to STAT activation. Phosphorylated on serine and tyrosine residues. CAV1 promotes phosphorylation on Ser-23 which then targets the complex to the plasma membrane, lipid rafts and caveolae. Phosphorylation on Ser-36 appears to modulate mitosis in endothelial cells. Phosphorylation on both Tyr-19 and Tyr-27 is required for insulin-induced 'Ser-727' phosphorylation of STAT3 and its activation. Phosphorylation on Tyr-19 is required for insulin-induced phosphorylation of MAPK1 and DNA binding of STAT3. Tyrosine phosphorylation is induced by both EGF and insulin (By. similarity).

It localises to the nucleus. The protein resides in the cytoplasm. It is found in the golgi apparatus membrane. The protein localises to the cell membrane. Its subcellular location is the membrane. It localises to the caveola. May act as a scaffolding protein within caveolar membranes. Interacts directly with G-protein alpha subunits and can functionally regulate their activity. Acts as an accessory protein in conjunction with CAV1 in targeting to lipid rafts and driving caveolae formation. The Ser-36 phosphorylated form has a role in modulating mitosis in endothelial cells. Positive regulator of cellular mitogenesis of the MAPK signaling pathway. Required for the insulin-stimulated nuclear translocation and activation of MAPK1 and STAT3, and the subsequent regulation of cell cycle progression. In Neofelis nebulosa (Clouded leopard), this protein is Caveolin-2 (CAV2).